The chain runs to 285 residues: Probable endonuclease 4 (285 aa).

Zn(2+)-binding residues include His-69, His-109, Glu-145, Asp-179, His-182, His-216, Asp-229, His-231, and Glu-261.

Belongs to the AP endonuclease 2 family. Zn(2+) serves as cofactor.

The enzyme catalyses Endonucleolytic cleavage to 5'-phosphooligonucleotide end-products.. Endonuclease IV plays a role in DNA repair. It cleaves phosphodiester bonds at apurinic or apyrimidinic (AP) sites, generating a 3'-hydroxyl group and a 5'-terminal sugar phosphate. This chain is Probable endonuclease 4, found in Escherichia coli O81 (strain ED1a).